Consider the following 25-residue polypeptide: Caerin-1.17 (25 aa).

The residue at position 25 (Leu25) is a Leucine amide.

Belongs to the frog skin active peptide (FSAP) family. Caerin subfamily. Expressed by the skin dorsal glands.

It localises to the secreted. Functionally, caerin-1.17 shows significant activity against Gram-positive organisms, but is less effective against Gram-negative organisms. This chain is Caerin-1.17, found in Ranoidea gracilenta (Dainty green tree frog).